The sequence spans 64 residues: DNA gyrase inhibitor YacG (64 aa).

Zn(2+)-binding residues include C7, C10, C26, and C30. The tract at residues 44 to 64 is disordered; the sequence is SIPGEPVVIANDDYNNEESDY.

It belongs to the DNA gyrase inhibitor YacG family. Interacts with GyrB. It depends on Zn(2+) as a cofactor.

Functionally, inhibits all the catalytic activities of DNA gyrase by preventing its interaction with DNA. Acts by binding directly to the C-terminal domain of GyrB, which probably disrupts DNA binding by the gyrase. The sequence is that of DNA gyrase inhibitor YacG from Idiomarina loihiensis (strain ATCC BAA-735 / DSM 15497 / L2-TR).